Here is a 553-residue protein sequence, read N- to C-terminus: Glutamate--tRNA ligase (553 aa).

The short motif at 41-51 (PSPTGFQHIGG) is the 'HIGH' region element. A 'KMSKS' region motif is present at residues 293 to 297 (KLSKR). Residue lysine 296 participates in ATP binding.

Belongs to the class-I aminoacyl-tRNA synthetase family. Glutamate--tRNA ligase type 1 subfamily. As to quaternary structure, monomer.

Its subcellular location is the cytoplasm. It catalyses the reaction tRNA(Glu) + L-glutamate + ATP = L-glutamyl-tRNA(Glu) + AMP + diphosphate. Its function is as follows. Catalyzes the attachment of glutamate to tRNA(Glu) in a two-step reaction: glutamate is first activated by ATP to form Glu-AMP and then transferred to the acceptor end of tRNA(Glu). This Clostridium beijerinckii (strain ATCC 51743 / NCIMB 8052) (Clostridium acetobutylicum) protein is Glutamate--tRNA ligase.